The primary structure comprises 328 residues: Phenylalanine--tRNA ligase alpha subunit (328 aa).

A Mg(2+)-binding site is contributed by Glu-253.

Belongs to the class-II aminoacyl-tRNA synthetase family. Phe-tRNA synthetase alpha subunit type 1 subfamily. Tetramer of two alpha and two beta subunits. Mg(2+) serves as cofactor.

The protein localises to the cytoplasm. The catalysed reaction is tRNA(Phe) + L-phenylalanine + ATP = L-phenylalanyl-tRNA(Phe) + AMP + diphosphate + H(+). The protein is Phenylalanine--tRNA ligase alpha subunit of Chromobacterium violaceum (strain ATCC 12472 / DSM 30191 / JCM 1249 / CCUG 213 / NBRC 12614 / NCIMB 9131 / NCTC 9757 / MK).